Reading from the N-terminus, the 467-residue chain is Fumarate hydratase class II (467 aa).

Substrate contacts are provided by residues 98-100 (SGT), arginine 126, 129-132 (HPND), 139-141 (SSN), and threonine 187. The active-site Proton donor/acceptor is the histidine 188. Serine 318 is an active-site residue. Residues serine 319 and 324 to 326 (KVN) contribute to the substrate site.

It belongs to the class-II fumarase/aspartase family. Fumarase subfamily. Homotetramer.

The protein localises to the cytoplasm. It carries out the reaction (S)-malate = fumarate + H2O. The protein operates within carbohydrate metabolism; tricarboxylic acid cycle; (S)-malate from fumarate: step 1/1. In terms of biological role, involved in the TCA cycle. Catalyzes the stereospecific interconversion of fumarate to L-malate. The sequence is that of Fumarate hydratase class II from Shigella flexneri.